The primary structure comprises 259 residues: MLMVIDIGNTNVVVGLFAGHELRARWRLATARDRMPDEWWVQLNVLSQSAGFSLGEVVGIAISSVVPSLTATFQELAQRYLLVEPLIVNGAQDYGLPVRVEHPAEVGADRICNAIAAVERYGAPVIVVDFGTGTTFDVIDADGAYIGGAIAPGITIAFEALTQRAARLYTVALQAPPRAIGRNTRESLQSGTVLGYAELVRGLIRRIRSELGHEAPAIATGGLATLIAPLVPEFSAVEADLTLYGLRSAYERMHRSLGA.

Aspartate 6 to valine 13 is a binding site for ATP. Glycine 107 to arginine 110 is a binding site for substrate. Aspartate 109 functions as the Proton acceptor in the catalytic mechanism. Aspartate 129 contacts K(+). Threonine 132 lines the ATP pocket. Threonine 184 provides a ligand contact to substrate.

This sequence belongs to the type III pantothenate kinase family. In terms of assembly, homodimer. NH4(+) serves as cofactor. It depends on K(+) as a cofactor.

The protein localises to the cytoplasm. The catalysed reaction is (R)-pantothenate + ATP = (R)-4'-phosphopantothenate + ADP + H(+). It participates in cofactor biosynthesis; coenzyme A biosynthesis; CoA from (R)-pantothenate: step 1/5. Catalyzes the phosphorylation of pantothenate (Pan), the first step in CoA biosynthesis. The chain is Type III pantothenate kinase from Thermomicrobium roseum (strain ATCC 27502 / DSM 5159 / P-2).